Reading from the N-terminus, the 278-residue chain is Potassium/proton antiporter CemA (278 aa).

Helical transmembrane passes span 60–80 (YLLL…SFVF), 155–175 (AMKN…LIVT), 201–221 (FLII…GWEV), and 239–259 (IFLF…YWIF).

This sequence belongs to the CemA family.

It localises to the plastid. The protein resides in the chloroplast inner membrane. The catalysed reaction is K(+)(in) + H(+)(out) = K(+)(out) + H(+)(in). In terms of biological role, contributes to K(+)/H(+) antiport activity by supporting proton efflux to control proton extrusion and homeostasis in chloroplasts in a light-dependent manner to modulate photosynthesis. Prevents excessive induction of non-photochemical quenching (NPQ) under continuous-light conditions. Indirectly promotes efficient inorganic carbon uptake into chloroplasts. In Rhodomonas salina (Cryptomonas salina), this protein is Potassium/proton antiporter CemA.